Consider the following 725-residue polypeptide: Methionine--tRNA ligase (725 aa).

Residues 27–37 carry the 'HIGH' region motif; it reads PYANGQIHIGH. Zn(2+) is bound by residues Cys158, Cys161, Cys171, and Cys174. The 'KMSKS' region signature appears at 348 to 352; sequence KMSKS. An ATP-binding site is contributed by Lys351. The 107-residue stretch at 619–725 folds into the tRNA-binding domain; sequence DFAKIDLRIA…SGAKPGMRVK (107 aa).

This sequence belongs to the class-I aminoacyl-tRNA synthetase family. MetG type 1 subfamily. Homodimer. Requires Zn(2+) as cofactor.

The protein resides in the cytoplasm. The catalysed reaction is tRNA(Met) + L-methionine + ATP = L-methionyl-tRNA(Met) + AMP + diphosphate. In terms of biological role, is required not only for elongation of protein synthesis but also for the initiation of all mRNA translation through initiator tRNA(fMet) aminoacylation. The protein is Methionine--tRNA ligase of Burkholderia pseudomallei (strain 668).